A 155-amino-acid chain; its full sequence is Medium/long-chain acyl-CoA thioesterase YigI (155 aa).

This sequence belongs to the YigI thioesterase family.

The protein resides in the cytoplasm. It catalyses the reaction a fatty acyl-CoA + H2O = a fatty acid + CoA + H(+). It carries out the reaction a medium-chain fatty acyl-CoA + H2O = a medium-chain fatty acid + CoA + H(+). The catalysed reaction is a long-chain fatty acyl-CoA + H2O = a long-chain fatty acid + CoA + H(+). In terms of biological role, displays thioesterase activity against medium- to long-chain acyl-CoA substrates. Is involved in the thioesterase-dependent beta-oxidation pathway of (9Z,11E)-octadecadienoate (conjugated linoleic acid or CLA), along with TesB and FadM. This Shigella flexneri protein is Medium/long-chain acyl-CoA thioesterase YigI (yigI).